The chain runs to 465 residues: COP9 signalosome complex subunit 5 (465 aa).

The MPN domain maps to V74–Q216. Residues H162, H164, and D175 each coordinate Zn(2+). The JAMM motif signature appears at H162 to D175. The tract at residues S364–H386 is disordered.

It belongs to the peptidase M67A family. CSN5 subfamily. As to quaternary structure, component of the COP9 signalosome (CSN) complex.

The protein resides in the cytoplasm. The protein localises to the nucleus. Its function is as follows. Catalytic Component of the COP9 signalosome (CSN) complex that acts as an regulator of the ubiquitin (Ubl) conjugation pathway by mediating the deneddylation of the cullin subunit of SCF-type E3 ubiquitin-protein ligase complexes. The sequence is that of COP9 signalosome complex subunit 5 (RRI1) from Candida glabrata (strain ATCC 2001 / BCRC 20586 / JCM 3761 / NBRC 0622 / NRRL Y-65 / CBS 138) (Yeast).